Here is a 486-residue protein sequence, read N- to C-terminus: MSSRLSGLLDRAAGKRVLCIGDVMLDRFIYGVVDRISPEAPVPVLRHSREASMPGGAANVARNLASLGLEPVLIGACGDDDAGRELLSIFDQDLSLSVRLVTAKGRPTTLKCRFVAGGHQLLRVDTENVAPVSEATEEELIGILSREAPGSAAILISDYAKGLLTDRLLKAVTKLAADLNIPLIADPKGRDFARYGAVDILKPNAFELSAAVHRSISTDEEAALALREALDTLPAKAIIVTRAARGISYIGQDGNVHHEAGRAREVFDVSGAGDTSLAALATAIAGGGTLSDAVHLAIAASGIAVGKAGTATVSAEEIKAALSVAGPVGRAGLLPMDAMIGQVERWRAAGLKIGFTNGCFDILHPGHIRVIEQARAHCDRLVVGLNSDNSVKRLKGPLRPINNEQARADVLSALSAVDGVIIFDTDTPLDAIAALNPDVLVKGGDYTRESIVGADIVEARGGEIVIVPLVAGHSTTAIIARSETGK.

The ribokinase stretch occupies residues 1 to 329; it reads MSSRLSGLLD…AALSVAGPVG (329 aa). 204–207 is an ATP binding site; that stretch reads NAFE. The active site involves D274. The cytidylyltransferase stretch occupies residues 355–486; the sequence is FTNGCFDILH…AIIARSETGK (132 aa).

The protein in the N-terminal section; belongs to the carbohydrate kinase PfkB family. In the C-terminal section; belongs to the cytidylyltransferase family. In terms of assembly, homodimer.

The catalysed reaction is D-glycero-beta-D-manno-heptose 7-phosphate + ATP = D-glycero-beta-D-manno-heptose 1,7-bisphosphate + ADP + H(+). It carries out the reaction D-glycero-beta-D-manno-heptose 1-phosphate + ATP + H(+) = ADP-D-glycero-beta-D-manno-heptose + diphosphate. The protein operates within nucleotide-sugar biosynthesis; ADP-L-glycero-beta-D-manno-heptose biosynthesis; ADP-L-glycero-beta-D-manno-heptose from D-glycero-beta-D-manno-heptose 7-phosphate: step 1/4. It functions in the pathway nucleotide-sugar biosynthesis; ADP-L-glycero-beta-D-manno-heptose biosynthesis; ADP-L-glycero-beta-D-manno-heptose from D-glycero-beta-D-manno-heptose 7-phosphate: step 3/4. Catalyzes the phosphorylation of D-glycero-D-manno-heptose 7-phosphate at the C-1 position to selectively form D-glycero-beta-D-manno-heptose-1,7-bisphosphate. Functionally, catalyzes the ADP transfer from ATP to D-glycero-beta-D-manno-heptose 1-phosphate, yielding ADP-D-glycero-beta-D-manno-heptose. The sequence is that of Bifunctional protein HldE from Hyphomonas neptunium (strain ATCC 15444).